We begin with the raw amino-acid sequence, 61 residues long: Large ribosomal subunit protein uL30 (61 aa).

The protein belongs to the universal ribosomal protein uL30 family. As to quaternary structure, part of the 50S ribosomal subunit.

This Thermosipho africanus (strain TCF52B) protein is Large ribosomal subunit protein uL30.